A 111-amino-acid chain; its full sequence is Cytochrome c (111 aa).

Residue alanine 1 is modified to N-acetylalanine. Cysteine 22, cysteine 25, and histidine 26 together coordinate heme c. Lysine 80 is subject to N6,N6,N6-trimethyllysine. Methionine 88 contacts heme c. Position 94 is an N6,N6,N6-trimethyllysine (lysine 94).

The protein belongs to the cytochrome c family. Binds 1 heme c group covalently per subunit.

Its subcellular location is the mitochondrion intermembrane space. In terms of biological role, electron carrier protein. The oxidized form of the cytochrome c heme group can accept an electron from the heme group of the cytochrome c1 subunit of cytochrome reductase. Cytochrome c then transfers this electron to the cytochrome oxidase complex, the final protein carrier in the mitochondrial electron-transport chain. The polypeptide is Cytochrome c (Brassica napus (Rape)).